The primary structure comprises 528 residues: Abrin-d (528 aa).

The residue at position 1 (glutamine 1) is a Pyrrolidone carboxylic acid. Residue glutamate 164 is part of the active site. N-linked (GlcNAc...) asparagine glycosylation occurs at asparagine 200. Intrachain disulfides connect cysteine 247-cysteine 269, cysteine 286-cysteine 305, and cysteine 329-cysteine 346. Residues 273–400 (YEPTVRIGGR…YLMRQGWRTG (128 aa)) form the Ricin B-type lectin 1 domain. The 1-alpha repeat unit spans residues 283-325 (DGMCVDVYDDGYHNGNRIIAWKCKDRLEENQLWTLKSDLTIRS). Residues 326–366 (NGKCLTTEGYAPGNYVMIYDCTSAVAEATYWEIWDNGTIIN) form a 1-beta repeat. N-linked (GlcNAc...) asparagine glycans are attached at residues asparagine 361 and asparagine 401. The stretch at 369–401 (SALVLSAESSSMGGTLTVQTNEYLMRQGWRTGN) is one 1-gamma repeat. One can recognise a Ricin B-type lectin 2 domain in the interval 403 to 527 (TSPFVTSISG…GKPNQIWLTL (125 aa)). A 2-alpha repeat occupies 414–449 (SDLCMQAQGSNVWLADCDNNKKEQQWALYTDGSIRS). 2 disulfide bridges follow: cysteine 417–cysteine 430 and cysteine 456–cysteine 473. A 2-beta repeat occupies 453–492 (TNNCLTSKDHKQGSPIVLMACSNGWASQRWLFKNDGSIYS). The 2-gamma repeat unit spans residues 495–528 (DDMVMDVKGSDPSLKQIILWPYTGKPNQIWLTLF).

This sequence in the N-terminal section; belongs to the ribosome-inactivating protein family. Type 2 RIP subfamily. As to quaternary structure, disulfide-linked dimer of A and B chains.

The catalysed reaction is Endohydrolysis of the N-glycosidic bond at one specific adenosine on the 28S rRNA.. Its function is as follows. The A chain is responsible for inhibiting protein synthesis through the catalytic inactivation of 60S ribosomal subunits by removing adenine from position 4,324 of 28S rRNA. Functionally, the B chain is a galactose-specific lectin that facilitates the binding of abrin to the cell membrane that precedes endocytosis. The polypeptide is Abrin-d (Abrus precatorius (Indian licorice)).